Here is a 157-residue protein sequence, read N- to C-terminus: DNA gyrase inhibitor (157 aa).

Belongs to the DNA gyrase inhibitor family. Interacts with DNA gyrase.

The protein resides in the cytoplasm. In terms of biological role, inhibits the supercoiling activity of DNA gyrase. Acts by inhibiting DNA gyrase at an early step, prior to (or at the step of) binding of DNA by the gyrase. It protects cells against toxins that target DNA gyrase, by inhibiting activity of these toxins and reducing the formation of lethal double-strand breaks in the cell. This chain is DNA gyrase inhibitor, found in Shigella boydii serotype 18 (strain CDC 3083-94 / BS512).